The primary structure comprises 242 residues: Biosynthetic peptidoglycan transglycosylase (242 aa).

The chain crosses the membrane as a helical span at residues 19-39 (LMVVLAVFWAGGIALFSVAPV).

The protein belongs to the glycosyltransferase 51 family.

Its subcellular location is the cell inner membrane. The catalysed reaction is [GlcNAc-(1-&gt;4)-Mur2Ac(oyl-L-Ala-gamma-D-Glu-L-Lys-D-Ala-D-Ala)](n)-di-trans,octa-cis-undecaprenyl diphosphate + beta-D-GlcNAc-(1-&gt;4)-Mur2Ac(oyl-L-Ala-gamma-D-Glu-L-Lys-D-Ala-D-Ala)-di-trans,octa-cis-undecaprenyl diphosphate = [GlcNAc-(1-&gt;4)-Mur2Ac(oyl-L-Ala-gamma-D-Glu-L-Lys-D-Ala-D-Ala)](n+1)-di-trans,octa-cis-undecaprenyl diphosphate + di-trans,octa-cis-undecaprenyl diphosphate + H(+). The protein operates within cell wall biogenesis; peptidoglycan biosynthesis. Its function is as follows. Peptidoglycan polymerase that catalyzes glycan chain elongation from lipid-linked precursors. This Shigella boydii serotype 4 (strain Sb227) protein is Biosynthetic peptidoglycan transglycosylase.